A 1154-amino-acid chain; its full sequence is Nitric oxide synthase, inducible (1154 aa).

A disordered region spans residues 22 to 58 (KDINNNVEKPPGATPSPSTQDDLKNHKHHNDSPQPLT). A DINNN-motif; mediates interaction with SPSB1, SPSB2 and SPSB4 motif is present at residues 23–27 (DINNN). Zn(2+) contacts are provided by C107 and C112. Residue C197 coordinates heme b. 4 residues coordinate L-arginine: Q260, W369, Y370, and E374. (6R)-L-erythro-5,6,7,8-tetrahydrobiopterin is bound by residues R378, I459, W460, and F473. Position 488 (Y488) interacts with heme b. The segment at 512-532 (LKVLVKAVLFASMLMRKTMAS) is calmodulin-binding. The region spanning 536-674 (VTILFATETG…AFRCWAVQTF (139 aa)) is the Flavodoxin-like domain. T542, E543, T544, K546, and S547 together coordinate FMN. Y572 is modified (phosphotyrosine). FMN is bound by residues S588, T589, S625, C632, and E658. The 241-residue stretch at 727-967 (KNVFTLRLKS…VRSAGNFKLP (241 aa)) folds into the FAD-binding FR-type domain. Residue R747 participates in NADP(+) binding. H769, R903, Y905, S906, T921, A923, Y927, V940, C941, and S942 together coordinate FAD. Residues T981, R1014, S1043, R1044, K1050, Y1052, Q1054, and D1087 each contribute to the NADP(+) site.

Belongs to the NOS family. In terms of assembly, homodimer. Interacts with NHERF1. Interacts with GAPDH; induced by oxidatively-modified low-densitity lipoprotein (LDL(ox)). Interacts with S100A8 and S100A9 to form the iNOS-S100A8/9 transnitrosylase complex. Interacts with SPSB1, SPSB2 and SPSB4. Interacts with ELOC and CUL5 in the presence of SPSB1 or SPSB2 or SPSB4. Forms a complex with ASL, ASS1 and HSP90AA1; the complex regulates cell-autonomous L-arginine synthesis and citrulline recycling while channeling extracellular L-arginine to nitric oxide synthesis pathway. Heme b serves as cofactor. Requires FAD as cofactor. The cofactor is FMN. (6R)-L-erythro-5,6,7,8-tetrahydrobiopterin is required as a cofactor. Polyubiquitinated; mediated by SPSB1, SPSB2 and SPSB4, leading to proteasomal degradation.

The protein localises to the cytoplasm. It is found in the cytosol. It carries out the reaction 2 L-arginine + 3 NADPH + 4 O2 + H(+) = 2 L-citrulline + 2 nitric oxide + 3 NADP(+) + 4 H2O. Regulated by calcium/calmodulin. Functionally, produces nitric oxide (NO) which is a messenger molecule with diverse functions throughout the body. In macrophages, NO mediates tumoricidal and bactericidal actions. Also has nitrosylase activity and mediates cysteine S-nitrosylation of cytoplasmic target proteins such PTGS2/COX2. As component of the iNOS-S100A8/9 transnitrosylase complex involved in the selective inflammatory stimulus-dependent S-nitrosylation of GAPDH implicated in regulation of the GAIT complex activity and probably multiple targets including ANXA5, EZR, MSN and VIM. Involved in inflammation, enhances the synthesis of pro-inflammatory mediators such as IL6 and IL8. This is Nitric oxide synthase, inducible (NOS2) from Canis lupus familiaris (Dog).